Reading from the N-terminus, the 199-residue chain is Photosystem II D1 precursor processing protein PSB27-H2, chloroplastic (199 aa).

This sequence belongs to the Psb27 family. In terms of assembly, interacts with the C-terminus of both the precursor and mature form of D1.

Its subcellular location is the plastid. The protein localises to the chloroplast thylakoid lumen. Required, but not essential, for D1 (psbA) precursor processing and thus correct photosystem II assembly (PSII). The chain is Photosystem II D1 precursor processing protein PSB27-H2, chloroplastic (PSB27-2) from Arabidopsis thaliana (Mouse-ear cress).